Consider the following 627-residue polypeptide: Hemocyanin D chain (627 aa).

Cu cation-binding residues include H171, H175, H202, H322, H326, and H362. N-linked (GlcNAc...) asparagine glycosylation is present at N445. C531 and C579 are oxidised to a cystine.

The protein belongs to the tyrosinase family. Hemocyanin subfamily. As to quaternary structure, tarantula hemocyanin is a 24-chain polymer with seven different chains identified. As to expression, hemolymph.

The protein resides in the secreted. Its subcellular location is the extracellular space. Its function is as follows. Hemocyanins are copper-containing oxygen carriers occurring freely dissolved in the hemolymph of many mollusks and arthropods. The chain is Hemocyanin D chain (HCD) from Aphonopelma sp. (American tarantula).